A 570-amino-acid chain; its full sequence is Zinc finger and BTB domain-containing protein 44 (570 aa).

A Glycyl lysine isopeptide (Lys-Gly) (interchain with G-Cter in SUMO2) cross-link involves residue Lys4. In terms of domain architecture, BTB spans 31–98; sequence CDITIRVQDK…AYTATLSINT (68 aa). A phosphoserine mark is found at Ser135, Ser159, Ser161, Ser165, Ser191, and Ser194. Disordered regions lie at residues 194–220 and 243–267; these read SPVKCGTQTSSPQVLNSSASYSENRNQ and EKVKQAENTRTLELPGPSETGRRMA. Residues 199 to 220 are compositionally biased toward polar residues; that stretch reads GTQTSSPQVLNSSASYSENRNQ. Thr200 carries the phosphothreonine modification. Lys290 participates in a covalent cross-link: Glycyl lysine isopeptide (Lys-Gly) (interchain with G-Cter in SUMO2). The segment at 295 to 369 is disordered; it reads SDEEVHEEVS…NAPPDDDDRL (75 aa). Low complexity predominate over residues 304 to 318; that stretch reads SQPVSASQSSLSDQQ. Residues 352-361 show a composition bias toward polar residues; that stretch reads TLQSTSSTNA. C2H2-type zinc fingers lie at residues 399-421, 427-449, 455-479, and 487-511; these read FQCPTCGVRFTRIQNLKQHMLIH, FQCDRCGKKFTRAYSLKMHRLKH, FRCQICSATFTSFGEYKHHMRVSRH, and YECKTCGAMFTNSGNLIVHLRSLNH.

The protein localises to the nucleus. In terms of biological role, may be involved in transcriptional regulation. In Homo sapiens (Human), this protein is Zinc finger and BTB domain-containing protein 44 (ZBTB44).